A 246-amino-acid polypeptide reads, in one-letter code: LexA repressor (246 aa).

The segment at 1-34 (MATPQTGKKTPSRRVSELPDGPPDATGLTPRQQR) is disordered. A DNA-binding region (H-T-H motif) is located at residues 52 to 72 (MREIGEAVGLTSSSSVAHQLK). Active-site for autocatalytic cleavage activity residues include Ser170 and Lys207.

This sequence belongs to the peptidase S24 family. In terms of assembly, homodimer.

The catalysed reaction is Hydrolysis of Ala-|-Gly bond in repressor LexA.. In terms of biological role, represses a number of genes involved in the response to DNA damage (SOS response), including recA and lexA. In the presence of single-stranded DNA, RecA interacts with LexA causing an autocatalytic cleavage which disrupts the DNA-binding part of LexA, leading to derepression of the SOS regulon and eventually DNA repair. The chain is LexA repressor from Nocardioides sp. (strain ATCC BAA-499 / JS614).